A 269-amino-acid polypeptide reads, in one-letter code: Proenkephalin-A (269 aa).

Positions 1-24 are cleaved as a signal peptide; it reads MAQFLRLCIWLLALGSCLLATVQA. 3 cysteine pairs are disulfide-bonded: C26/C48, C30/C52, and C33/C65. Residues 165–191 are disordered; that stretch reads DNRAKDSHQQESTNNDEDSTSKRYGGF. 2 consecutive propeptides follow at residues 198–209 and 219–229; these read SPQLEDEAKELQ and VGRPEWWMDYQ. Residue S253 is modified to Phosphoserine.

This sequence belongs to the opioid neuropeptide precursor family. In terms of processing, proenkephalin-A is cleaved by CTSL to generate Met-enkephalin. Post-translationally, processed and degraded by ACE. Probably cleaved by ACE. In terms of processing, processed by ACE to generate Met-enkephalin in the nucleus accumbens of the brain. Post-translationally, the N-terminal domain contains 6 conserved cysteines thought to be involved in disulfide bonding and/or processing. In terms of tissue distribution, expressed in brain, heart and testis.

It localises to the secreted. Its subcellular location is the cytoplasmic vesicle. The protein resides in the secretory vesicle. It is found in the chromaffin granule lumen. Functionally, neuropeptide that competes with and mimic the effects of opiate drugs. They play a role in a number of physiologic functions, including pain perception and responses to stress. Its function is as follows. Met-enkephalin-Arg-Phe neuropeptide acts as a strong ligand of Mu-type opioid receptor OPRM1. Met-enkephalin-Arg-Phe-binding to OPRM1 in the nucleus accumbens of the brain increases activation of OPRM1, leading to long-term synaptic depression of glutamate release. In terms of biological role, increases glutamate release in the striatum and decreases GABA concentration in the striatum. Increases glutamate release in the striatum. In Rattus norvegicus (Rat), this protein is Proenkephalin-A (Penk).